The sequence spans 637 residues: tRNA 5-methylaminomethyl-2-thiouridine biosynthesis bifunctional protein MnmC (637 aa).

The interval 1 to 231 is tRNA (mnm(5)s(2)U34)-methyltransferase; it reads MPIDPARLAF…KRQMCRGRHR (231 aa). The segment at 250–637 is FAD-dependent cmnm(5)s(2)U34 oxidoreductase; the sequence is IGAGLAGSST…RPARGMTREG (388 aa).

In the N-terminal section; belongs to the methyltransferase superfamily. tRNA (mnm(5)s(2)U34)-methyltransferase family. It in the C-terminal section; belongs to the DAO family. It depends on FAD as a cofactor.

The protein resides in the cytoplasm. It catalyses the reaction 5-aminomethyl-2-thiouridine(34) in tRNA + S-adenosyl-L-methionine = 5-methylaminomethyl-2-thiouridine(34) in tRNA + S-adenosyl-L-homocysteine + H(+). Its function is as follows. Catalyzes the last two steps in the biosynthesis of 5-methylaminomethyl-2-thiouridine (mnm(5)s(2)U) at the wobble position (U34) in tRNA. Catalyzes the FAD-dependent demodification of cmnm(5)s(2)U34 to nm(5)s(2)U34, followed by the transfer of a methyl group from S-adenosyl-L-methionine to nm(5)s(2)U34, to form mnm(5)s(2)U34. This is tRNA 5-methylaminomethyl-2-thiouridine biosynthesis bifunctional protein MnmC from Aromatoleum aromaticum (strain DSM 19018 / LMG 30748 / EbN1) (Azoarcus sp. (strain EbN1)).